Consider the following 314-residue polypeptide: Olfactory receptor 6C6 (314 aa).

Residues 1-24 lie on the Extracellular side of the membrane; sequence MKNKSMEIEFILLGLTDDPQLQIV. N-linked (GlcNAc...) asparagine glycosylation is present at N3. Residues 25–45 traverse the membrane as a helical segment; sequence IFLFLFLNYTLSLMGNLIIII. Residues 46-63 lie on the Cytoplasmic side of the membrane; sequence LTLLDPRLKTPMYFFLRN. A helical membrane pass occupies residues 64–84; the sequence is FSFLEVIFTTVCIPRFLITIV. At 85-95 the chain is on the extracellular side; that stretch reads TRDKTISYNNC. The cysteines at positions 95 and 177 are disulfide-linked. A helical transmembrane segment spans residues 96–116; that stretch reads ATQLFFILLPGVTEFYLLAAM. At 117 to 141 the chain is on the cytoplasmic side; the sequence is SYDRYVAICKPLHYPIIMSSKVCYQ. A helical transmembrane segment spans residues 142–162; that stretch reads LVLSSWVTGFLIIFPPLVMGL. Residues 163–199 are Extracellular-facing; it reads KLDFCASKTIDHFMCETSPILQISCTDTHVLELMSFT. A helical membrane pass occupies residues 200–220; it reads LAVVTLVVTLVLVILSYTCII. At 221–237 the chain is on the cytoplasmic side; sequence KTILKFSSAQQRNKAFS. The chain crosses the membrane as a helical span at residues 238–258; it reads TCTSHMIVVSMTYGSCIFMYI. At 259–269 the chain is on the extracellular side; that stretch reads KPSAKERVTVS. The helical transmembrane segment at 270-290 threads the bilayer; sequence KGVALLYTSIAPLLNPFIYTL. The Cytoplasmic segment spans residues 291-314; sequence RNQQVKEVFWDVLQKNLCFSKRPF.

This sequence belongs to the G-protein coupled receptor 1 family.

The protein resides in the cell membrane. In terms of biological role, odorant receptor. The protein is Olfactory receptor 6C6 (OR6C6) of Homo sapiens (Human).